A 266-amino-acid chain; its full sequence is 3-methyl-2-oxobutanoate hydroxymethyltransferase (266 aa).

2 residues coordinate Mg(2+): Asp-45 and Asp-84. Residues 45-46, Asp-84, and Lys-112 each bind 3-methyl-2-oxobutanoate; that span reads DS. Glu-114 provides a ligand contact to Mg(2+). The active-site Proton acceptor is Glu-181.

It belongs to the PanB family. As to quaternary structure, homodecamer; pentamer of dimers. Mg(2+) serves as cofactor.

The protein resides in the cytoplasm. It catalyses the reaction 3-methyl-2-oxobutanoate + (6R)-5,10-methylene-5,6,7,8-tetrahydrofolate + H2O = 2-dehydropantoate + (6S)-5,6,7,8-tetrahydrofolate. It participates in cofactor biosynthesis; (R)-pantothenate biosynthesis; (R)-pantoate from 3-methyl-2-oxobutanoate: step 1/2. Catalyzes the reversible reaction in which hydroxymethyl group from 5,10-methylenetetrahydrofolate is transferred onto alpha-ketoisovalerate to form ketopantoate. In Pseudomonas fluorescens (strain Pf0-1), this protein is 3-methyl-2-oxobutanoate hydroxymethyltransferase.